A 513-amino-acid polypeptide reads, in one-letter code: Pantetheinase (513 aa).

The first 22 residues, 1 to 22 (MITSPLLAYVAILFFCVLKASS), serve as a signal peptide directing secretion. Positions 40–307 (APLTPVSHEE…GKLLLSQLDS (268 aa)) constitute a CN hydrolase domain. The Proton acceptor role is filled by Glu-80. N-linked (GlcNAc...) asparagine glycosylation occurs at Asn-147. Residue Lys-179 is the Proton donor of the active site. Residue Cys-212 is the Nucleophile of the active site. 2 N-linked (GlcNAc...) asparagine glycosylation sites follow: Asn-315 and Asn-353. Gly-487 is lipidated: GPI-anchor amidated glycine. The propeptide at 488–513 (ASADLVAQGLRVMLGVIITIMYSLSW) is removed in mature form.

It belongs to the carbon-nitrogen hydrolase superfamily. BTD/VNN family. As to quaternary structure, monomer. Detected in kidney (at protein level).

It localises to the cell membrane. It carries out the reaction (R)-pantetheine + H2O = cysteamine + (R)-pantothenate. In terms of biological role, amidohydrolase that hydrolyzes specifically one of the carboamide linkages in D-pantetheine thus recycling pantothenic acid (vitamin B5) and releasing cysteamine. The polypeptide is Pantetheinase (VNN1) (Sus scrofa (Pig)).